A 648-amino-acid polypeptide reads, in one-letter code: Biosynthetic arginine decarboxylase (648 aa).

Lysine 109 is subject to N6-(pyridoxal phosphate)lysine. Residue 291-301 (IDVGGGLGIDF) coordinates substrate.

The protein belongs to the Orn/Lys/Arg decarboxylase class-II family. SpeA subfamily. Mg(2+) serves as cofactor. Requires pyridoxal 5'-phosphate as cofactor.

The enzyme catalyses L-arginine + H(+) = agmatine + CO2. It functions in the pathway amine and polyamine biosynthesis; agmatine biosynthesis; agmatine from L-arginine: step 1/1. In terms of biological role, catalyzes the biosynthesis of agmatine from arginine. In Prochlorococcus marinus (strain MIT 9312), this protein is Biosynthetic arginine decarboxylase.